Consider the following 251-residue polypeptide: Ditrans,polycis-undecaprenyl-diphosphate synthase ((2E,6E)-farnesyl-diphosphate specific) (251 aa).

D26 is an active-site residue. Position 26 (D26) interacts with Mg(2+). Substrate contacts are provided by residues 27–30 (GNGR), W31, R39, H43, and 71–73 (SSE). The active-site Proton acceptor is N74. Residues W75, R77, R194, and 200 to 202 (RIS) contribute to the substrate site. A Mg(2+)-binding site is contributed by E213.

Belongs to the UPP synthase family. In terms of assembly, homodimer. Requires Mg(2+) as cofactor.

It catalyses the reaction 8 isopentenyl diphosphate + (2E,6E)-farnesyl diphosphate = di-trans,octa-cis-undecaprenyl diphosphate + 8 diphosphate. Functionally, catalyzes the sequential condensation of isopentenyl diphosphate (IPP) with (2E,6E)-farnesyl diphosphate (E,E-FPP) to yield (2Z,6Z,10Z,14Z,18Z,22Z,26Z,30Z,34E,38E)-undecaprenyl diphosphate (di-trans,octa-cis-UPP). UPP is the precursor of glycosyl carrier lipid in the biosynthesis of bacterial cell wall polysaccharide components such as peptidoglycan and lipopolysaccharide. The chain is Ditrans,polycis-undecaprenyl-diphosphate synthase ((2E,6E)-farnesyl-diphosphate specific) from Buchnera aphidicola subsp. Acyrthosiphon pisum (strain APS) (Acyrthosiphon pisum symbiotic bacterium).